A 192-amino-acid polypeptide reads, in one-letter code: Erythropoietin (192 aa).

The signal sequence occupies residues 1 to 26 (MGVPERPTLLLLLSLLLIPLGLPVLC). The cysteines at positions 33 and 187 are disulfide-linked. Residues asparagine 50, asparagine 64, and asparagine 109 are each glycosylated (N-linked (GlcNAc...) asparagine).

The protein belongs to the EPO/TPO family. Produced by kidney or liver of adult mammals and by liver of fetal or neonatal mammals.

It is found in the secreted. Hormone involved in the regulation of erythrocyte proliferation and differentiation and the maintenance of a physiological level of circulating erythrocyte mass. Binds to EPOR leading to EPOR dimerization and JAK2 activation thereby activating specific downstream effectors, including STAT1 and STAT3. The protein is Erythropoietin (Epo) of Mus musculus (Mouse).